Consider the following 132-residue polypeptide: Small ribosomal subunit protein uS8 (132 aa).

Belongs to the universal ribosomal protein uS8 family. In terms of assembly, part of the 30S ribosomal subunit. Contacts proteins S5 and S12.

Functionally, one of the primary rRNA binding proteins, it binds directly to 16S rRNA central domain where it helps coordinate assembly of the platform of the 30S subunit. This Xylella fastidiosa (strain M12) protein is Small ribosomal subunit protein uS8.